We begin with the raw amino-acid sequence, 394 residues long: Queuine tRNA-ribosyltransferase accessory subunit 2 (394 aa).

Zn(2+)-binding residues include Cys-336, Cys-338, Cys-341, and His-367.

Belongs to the queuine tRNA-ribosyltransferase family. QTRT2 subfamily. In terms of assembly, heterodimer of a catalytic subunit and an accessory subunit. Zn(2+) serves as cofactor.

The protein resides in the cytoplasm. Non-catalytic subunit of the queuine tRNA-ribosyltransferase (TGT) that catalyzes the base-exchange of a guanine (G) residue with queuine (Q) at position 34 (anticodon wobble position) in tRNAs with GU(N) anticodons (tRNA-Asp, -Asn, -His and -Tyr), resulting in the hypermodified nucleoside queuosine (7-(((4,5-cis-dihydroxy-2-cyclopenten-1-yl)amino)methyl)-7-deazaguanosine). This chain is Queuine tRNA-ribosyltransferase accessory subunit 2, found in Ixodes scapularis (Black-legged tick).